We begin with the raw amino-acid sequence, 635 residues long: Replication factor C small subunit (635 aa).

51-58 (GPPGTGKT) lines the ATP pocket.

It belongs to the activator 1 small subunits family. RfcS subfamily. In terms of assembly, heteromultimer composed of small subunits (RfcS) and large subunits (RfcL). This protein undergoes a protein self splicing that involves a post-translational excision of the intervening region (intein) followed by peptide ligation.

In terms of biological role, part of the RFC clamp loader complex which loads the PCNA sliding clamp onto DNA. This Methanopyrus kandleri (strain AV19 / DSM 6324 / JCM 9639 / NBRC 100938) protein is Replication factor C small subunit (rfcS).